Consider the following 245-residue polypeptide: Glutathione S-transferase F4 (245 aa).

The GST N-terminal domain occupies 25–106; it reads AGYKVHGDPF…YIAYVHSSRG (82 aa). Residues 35 to 36, 64 to 65, 77 to 78, and 90 to 91 each bind glutathione; these read ST, HK, QV, and ES. Residues 114–244 form the GST C-terminal domain; it reads SHETMATLTM…QEKSWFNKPR (131 aa).

The protein belongs to the GST superfamily. Phi family.

The protein localises to the cytoplasm. Its subcellular location is the cytosol. The catalysed reaction is RX + glutathione = an S-substituted glutathione + a halide anion + H(+). In terms of biological role, may be involved in the conjugation of reduced glutathione to a wide number of exogenous and endogenous hydrophobic electrophiles and have a detoxification role against certain herbicides. The protein is Glutathione S-transferase F4 (GSTF4) of Arabidopsis thaliana (Mouse-ear cress).